The sequence spans 104 residues: Large ribosomal subunit protein uL24 (104 aa).

Belongs to the universal ribosomal protein uL24 family. As to quaternary structure, part of the 50S ribosomal subunit.

In terms of biological role, one of two assembly initiator proteins, it binds directly to the 5'-end of the 23S rRNA, where it nucleates assembly of the 50S subunit. One of the proteins that surrounds the polypeptide exit tunnel on the outside of the subunit. The chain is Large ribosomal subunit protein uL24 from Pseudomonas savastanoi pv. phaseolicola (strain 1448A / Race 6) (Pseudomonas syringae pv. phaseolicola (strain 1448A / Race 6)).